Reading from the N-terminus, the 323-residue chain is GTP 3',8-cyclase (323 aa).

A Radical SAM core domain is found at 5 to 228; sequence GFGRKVDYLR…TVLRDTSSPA (224 aa). GTP is bound at residue Arg14. Residues Cys21 and Cys25 each contribute to the [4Fe-4S] cluster site. Residue Tyr27 coordinates S-adenosyl-L-methionine. Residue Cys28 participates in [4Fe-4S] cluster binding. Arg64 serves as a coordination point for GTP. Residue Gly68 coordinates S-adenosyl-L-methionine. Thr95 contributes to the GTP binding site. Ser119 provides a ligand contact to S-adenosyl-L-methionine. Lys155 contributes to the GTP binding site. Residue Met189 coordinates S-adenosyl-L-methionine. Cys250 and Cys253 together coordinate [4Fe-4S] cluster. Residue 255 to 257 participates in GTP binding; sequence RIR. Cys267 provides a ligand contact to [4Fe-4S] cluster. A compositionally biased stretch (basic and acidic residues) spans 302–313; sequence KNKWSQKDDNEV. The segment at 302 to 323 is disordered; the sequence is KNKWSQKDDNEVSTRAFYQTGG.

This sequence belongs to the radical SAM superfamily. MoaA family. In terms of assembly, monomer and homodimer. The cofactor is [4Fe-4S] cluster.

The enzyme catalyses GTP + AH2 + S-adenosyl-L-methionine = (8S)-3',8-cyclo-7,8-dihydroguanosine 5'-triphosphate + 5'-deoxyadenosine + L-methionine + A + H(+). The protein operates within cofactor biosynthesis; molybdopterin biosynthesis. In terms of biological role, catalyzes the cyclization of GTP to (8S)-3',8-cyclo-7,8-dihydroguanosine 5'-triphosphate. This chain is GTP 3',8-cyclase, found in Aliarcobacter butzleri (strain RM4018) (Arcobacter butzleri).